A 282-amino-acid polypeptide reads, in one-letter code: Phosphatidylserine decarboxylase proenzyme (282 aa).

Residues Asp88, His145, and Ser248 each act as charge relay system; for autoendoproteolytic cleavage activity in the active site. The active-site Schiff-base intermediate with substrate; via pyruvic acid; for decarboxylase activity is Ser248. Ser248 carries the pyruvic acid (Ser); by autocatalysis modification.

This sequence belongs to the phosphatidylserine decarboxylase family. PSD-B subfamily. Prokaryotic type I sub-subfamily. In terms of assembly, heterodimer of a large membrane-associated beta subunit and a small pyruvoyl-containing alpha subunit. Pyruvate is required as a cofactor. Post-translationally, is synthesized initially as an inactive proenzyme. Formation of the active enzyme involves a self-maturation process in which the active site pyruvoyl group is generated from an internal serine residue via an autocatalytic post-translational modification. Two non-identical subunits are generated from the proenzyme in this reaction, and the pyruvate is formed at the N-terminus of the alpha chain, which is derived from the carboxyl end of the proenzyme. The autoendoproteolytic cleavage occurs by a canonical serine protease mechanism, in which the side chain hydroxyl group of the serine supplies its oxygen atom to form the C-terminus of the beta chain, while the remainder of the serine residue undergoes an oxidative deamination to produce ammonia and the pyruvoyl prosthetic group on the alpha chain. During this reaction, the Ser that is part of the protease active site of the proenzyme becomes the pyruvoyl prosthetic group, which constitutes an essential element of the active site of the mature decarboxylase.

Its subcellular location is the cell membrane. The enzyme catalyses a 1,2-diacyl-sn-glycero-3-phospho-L-serine + H(+) = a 1,2-diacyl-sn-glycero-3-phosphoethanolamine + CO2. It functions in the pathway phospholipid metabolism; phosphatidylethanolamine biosynthesis; phosphatidylethanolamine from CDP-diacylglycerol: step 2/2. Catalyzes the formation of phosphatidylethanolamine (PtdEtn) from phosphatidylserine (PtdSer). This Dechloromonas aromatica (strain RCB) protein is Phosphatidylserine decarboxylase proenzyme.